Here is a 570-residue protein sequence, read N- to C-terminus: Vacuolar protein sorting-associated protein 45 (570 aa).

2 positions are modified to phosphoserine: S307 and S441.

The protein belongs to the STXBP/unc-18/SEC1 family. In terms of assembly, interacts with STX6 and ZFYVE20. As to expression, ubiquitous; expression was highest in testis and in brain. Detected in every part of the brain.

Its subcellular location is the golgi apparatus membrane. The protein resides in the endosome membrane. In terms of biological role, may play a role in vesicle-mediated protein trafficking from the Golgi stack through the trans-Golgi network. The chain is Vacuolar protein sorting-associated protein 45 (Vps45) from Rattus norvegicus (Rat).